Here is a 505-residue protein sequence, read N- to C-terminus: Flagellin (505 aa).

Belongs to the bacterial flagellin family.

It is found in the secreted. The protein localises to the bacterial flagellum. In terms of biological role, flagellin is the subunit protein which polymerizes to form the filaments of bacterial flagella. This is Flagellin (fliC) from Salmonella dublin.